The chain runs to 351 residues: Glycerol-1-phosphate dehydrogenase [NAD(P)+] (351 aa).

NAD(+) contacts are provided by residues 97–101 (GKVID) and 119–122 (TSPS). Asp-124 lines the substrate pocket. Ser-128 contacts NAD(+). Asp-171 serves as a coordination point for substrate. 2 residues coordinate Zn(2+): Asp-171 and His-251. Residue His-255 coordinates substrate. Residue His-267 participates in Zn(2+) binding.

Belongs to the glycerol-1-phosphate dehydrogenase family. Homodimer. It depends on Zn(2+) as a cofactor.

The protein localises to the cytoplasm. The enzyme catalyses sn-glycerol 1-phosphate + NAD(+) = dihydroxyacetone phosphate + NADH + H(+). It catalyses the reaction sn-glycerol 1-phosphate + NADP(+) = dihydroxyacetone phosphate + NADPH + H(+). It participates in membrane lipid metabolism; glycerophospholipid metabolism. Functionally, catalyzes the NAD(P)H-dependent reduction of dihydroxyacetonephosphate (DHAP or glycerone phosphate) to glycerol 1-phosphate (G1P). The G1P thus generated is used as the glycerophosphate backbone of phospholipids in the cellular membranes of Archaea. This Saccharolobus islandicus (strain M.16.27) (Sulfolobus islandicus) protein is Glycerol-1-phosphate dehydrogenase [NAD(P)+].